The chain runs to 673 residues: uncharacterized protein (673 aa).

Residues 1 to 208 (MSTHSNDYFS…STGQLELPPD (208 aa)) lie on the Cytoplasmic side of the membrane. S57, S112, and S172 each carry phosphoserine. Residues 209 to 229 (GGYGWVVTFCVFLTMFSTWGC) traverse the membrane as a helical segment. A glycan (N-linked (GlcNAc...) asparagine) is linked at N230. Residues 230–255 (NASFGVDLAYYLNHDTYPGASKYDYA) are Lumenal-facing. A helical membrane pass occupies residues 256–276 (LIAGLTVFLGQLLSPLVMALM). Residue R277 is a topological domain, cytoplasmic. A helical membrane pass occupies residues 278 to 298 (IIGLRTTMLFGDAVMLAAYLL). Topologically, residues 299-315 (ASFTTKLWQLYVTQGFM) are lumenal. A helical membrane pass occupies residues 316–336 (VGCSISLIFVPATTVLPGWFL). The Cytoplasmic segment spans residues 337–339 (KKR). A helical membrane pass occupies residues 340–360 (AVAMGVSLLGTGAGGVVYGLA). The Lumenal portion of the chain corresponds to 361–372 (TNKMLSDFGNTR). Residues 373 to 393 (WCLRIIGISCSISVLVAIALL) form a helical membrane-spanning segment. At 394 to 426 (KERNPTPAIGLKSPRAMFEQLKAMFSLKVITKP) the chain is on the cytoplasmic side. Residues 427-447 (FVVLIALWFMFALFAYNMMVF) form a helical membrane-spanning segment. Residues 448 to 504 (TLSSYAISKGLSSHDASTLTAILNGSQSIGRPLMGLAGDKFGRANVTIVLTTLLTIY) lie on the Lumenal side of the membrane. N-linked (GlcNAc...) asparagine glycosylation is found at N471 and N492. A helical membrane pass occupies residues 505 to 525 (MFAFWIPAHTFVQLIFFSILV). Topologically, residues 526–549 (GSCVGVANVMNTVLIADMVKPEEF) are cytoplasmic. The helical transmembrane segment at 550–570 (LPAWAFVNYCGAPFLLVCEVI) threads the bilayer. Residues 571–584 (AQALTVEKDKSNPY) are Lumenal-facing. The helical transmembrane segment at 585–605 (LHAQIFCGCCFIAALILISIL) threads the bilayer. Topologically, residues 606 to 673 (REYSIRMKLT…FLRMVYPMKV (68 aa)) are cytoplasmic. S637 is subject to Phosphoserine.

Belongs to the major facilitator superfamily. Monocarboxylate porter (TC 2.A.1.13) family.

It is found in the endoplasmic reticulum membrane. This is an uncharacterized protein from Saccharomyces cerevisiae (strain ATCC 204508 / S288c) (Baker's yeast).